The following is a 90-amino-acid chain: UPF0213 protein Reut_B5558 (90 aa).

The GIY-YIG domain occupies 5-80; sequence RQWYLYLLEC…KRMSSAQKIA (76 aa).

Belongs to the UPF0213 family.

The chain is UPF0213 protein Reut_B5558 from Cupriavidus pinatubonensis (strain JMP 134 / LMG 1197) (Cupriavidus necator (strain JMP 134)).